A 202-amino-acid chain; its full sequence is Crossover junction endodeoxyribonuclease RuvC (202 aa).

Catalysis depends on residues Asp-7, Glu-68, and Asp-141. Residues Asp-7, Glu-68, and Asp-141 each coordinate Mg(2+).

It belongs to the RuvC family. Homodimer which binds Holliday junction (HJ) DNA. The HJ becomes 2-fold symmetrical on binding to RuvC with unstacked arms; it has a different conformation from HJ DNA in complex with RuvA. In the full resolvosome a probable DNA-RuvA(4)-RuvB(12)-RuvC(2) complex forms which resolves the HJ. It depends on Mg(2+) as a cofactor.

The protein resides in the cytoplasm. The catalysed reaction is Endonucleolytic cleavage at a junction such as a reciprocal single-stranded crossover between two homologous DNA duplexes (Holliday junction).. Functionally, the RuvA-RuvB-RuvC complex processes Holliday junction (HJ) DNA during genetic recombination and DNA repair. Endonuclease that resolves HJ intermediates. Cleaves cruciform DNA by making single-stranded nicks across the HJ at symmetrical positions within the homologous arms, yielding a 5'-phosphate and a 3'-hydroxyl group; requires a central core of homology in the junction. The consensus cleavage sequence is 5'-(A/T)TT(C/G)-3'. Cleavage occurs on the 3'-side of the TT dinucleotide at the point of strand exchange. HJ branch migration catalyzed by RuvA-RuvB allows RuvC to scan DNA until it finds its consensus sequence, where it cleaves and resolves the cruciform DNA. In Clavibacter michiganensis subsp. michiganensis (strain NCPPB 382), this protein is Crossover junction endodeoxyribonuclease RuvC.